We begin with the raw amino-acid sequence, 244 residues long: Histone H1, orphon (244 aa).

A compositionally biased stretch (low complexity) spans 1-21 (MSDPAPEIEAPVEAAPVASPP). 2 disordered regions span residues 1 to 59 (MSDP…PVSE) and 113 to 244 (QAKG…KKAK). The segment covering 35-45 (PKAEKPKSDKP) has biased composition (basic and acidic residues). Residues 53–127 (THPPVSEMVV…GASGSFKLPP (75 aa)) enclose the H15 domain. Positions 186 to 203 (AKPASKKAAAPKPKAAKP) are enriched in low complexity. Residues 213–244 (ATKAAAKKPVAKPVAKKPAAKPAKKPAAKKAK) are compositionally biased toward basic residues.

This sequence belongs to the histone H1/H5 family.

The protein resides in the nucleus. It is found in the chromosome. Histones H1 are necessary for the condensation of nucleosome chains into higher-order structures. The sequence is that of Histone H1, orphon from Chironomus thummi thummi (Midge).